The chain runs to 399 residues: Acetate kinase (399 aa).

N7 is a Mg(2+) binding site. ATP is bound at residue K14. Position 91 (R91) interacts with substrate. The Proton donor/acceptor role is filled by D148. ATP is bound by residues 208–212, 283–285, and 331–335; these read HIGNG, DMR, and GVGEN. E385 lines the Mg(2+) pocket.

This sequence belongs to the acetokinase family. In terms of assembly, homodimer. It depends on Mg(2+) as a cofactor. The cofactor is Mn(2+).

The protein localises to the cytoplasm. The catalysed reaction is acetate + ATP = acetyl phosphate + ADP. Its pathway is metabolic intermediate biosynthesis; acetyl-CoA biosynthesis; acetyl-CoA from acetate: step 1/2. Catalyzes the formation of acetyl phosphate from acetate and ATP. Can also catalyze the reverse reaction. In Bacteroides thetaiotaomicron (strain ATCC 29148 / DSM 2079 / JCM 5827 / CCUG 10774 / NCTC 10582 / VPI-5482 / E50), this protein is Acetate kinase.